The following is a 474-amino-acid chain: Cysteine--tRNA ligase (474 aa).

Cys30 is a binding site for Zn(2+). Residues 32–42 (PTVYNYAHIGN) carry the 'HIGH' region motif. Residues Cys215, His240, and Glu244 each coordinate Zn(2+). A 'KMSKS' region motif is present at residues 272–276 (KMSKS). Position 275 (Lys275) interacts with ATP.

Belongs to the class-I aminoacyl-tRNA synthetase family. In terms of assembly, monomer. It depends on Zn(2+) as a cofactor.

The protein resides in the cytoplasm. The catalysed reaction is tRNA(Cys) + L-cysteine + ATP = L-cysteinyl-tRNA(Cys) + AMP + diphosphate. The chain is Cysteine--tRNA ligase from Brachyspira hyodysenteriae (strain ATCC 49526 / WA1).